Here is a 146-residue protein sequence, read N- to C-terminus: Transcriptional regulator MraZ (146 aa).

SpoVT-AbrB domains are found at residues 5 to 51 (NHPT…PLQE) and 80 to 123 (GQMV…NHEA).

This sequence belongs to the MraZ family. As to quaternary structure, forms oligomers.

Its subcellular location is the cytoplasm. The protein localises to the nucleoid. The chain is Transcriptional regulator MraZ from Acidobacterium capsulatum (strain ATCC 51196 / DSM 11244 / BCRC 80197 / JCM 7670 / NBRC 15755 / NCIMB 13165 / 161).